Consider the following 118-residue polypeptide: uncharacterized protein (118 aa).

This is an uncharacterized protein from Sulfolobus islandicus filamentous virus (isolate Iceland/Hveragerdi) (SIFV).